A 122-amino-acid polypeptide reads, in one-letter code: Protein 6 (122 aa).

The sequence is that of Protein 6 (6) from Hordeum vulgare (Barley).